We begin with the raw amino-acid sequence, 73 residues long: Sec-independent protein translocase protein TatA (73 aa).

A helical membrane pass occupies residues methionine 1–glycine 21. The interval lysine 50–lysine 73 is disordered. Basic and acidic residues predominate over residues lysine 62–lysine 73.

It belongs to the TatA/E family. As to quaternary structure, the Tat system comprises two distinct complexes: a TatABC complex, containing multiple copies of TatA, TatB and TatC subunits, and a separate TatA complex, containing only TatA subunits. Substrates initially bind to the TatABC complex, which probably triggers association of the separate TatA complex to form the active translocon.

It is found in the cell inner membrane. Its function is as follows. Part of the twin-arginine translocation (Tat) system that transports large folded proteins containing a characteristic twin-arginine motif in their signal peptide across membranes. TatA could form the protein-conducting channel of the Tat system. The sequence is that of Sec-independent protein translocase protein TatA from Polynucleobacter necessarius subsp. necessarius (strain STIR1).